A 572-amino-acid polypeptide reads, in one-letter code: Nuclear hormone receptor family member nhr-25 (572 aa).

The nuclear receptor DNA-binding region spans 15-90; that stretch reads GEMCPVCGDR…MGMKMEAVRA (76 aa). 2 NR C4-type zinc fingers span residues 18–38 and 54–78; these read CPVC…CESC and CSAE…FQKC. An NR LBD domain is found at 307–567; that stretch reads PTEKTVDHFY…PTPQATYTAV (261 aa).

The protein belongs to the nuclear hormone receptor family. In terms of assembly, interacts with lin-39. Interacts with nob-1. As to expression, expressed in the epidermis, the developing somatic gonad, and a subset of other epithelial cells.

It is found in the nucleus. Orphan nuclear receptor and probable transcription activator, required during development. Plays a role in male tail tip morphogenesis regulating the expression of the transcription factor dmd-3 in a negative feedback loop. Regulates vulval precursor cell (VPC) differentiation, in concert with homeobox protein lin-39. Involved in promoting embryogenesis, in concert with homeobox protein nob-1. May play a role in modulation of lifespan and immunity. This chain is Nuclear hormone receptor family member nhr-25, found in Caenorhabditis elegans.